The following is a 229-amino-acid chain: MASERPTGSESGDAGVVLEGNREASQDIKMALYKHGRLIPSLGDAKFGRPMIAEILEKKFESYRNDQTLNIRGTLFFGVSSSLSGVMANLVFRYSFKVKYEALRTYASLTTLPFVATAVTYKLFVTDALQSGNISQESCVLRSSLIGVACGVSYPSALAFYKNGRLAVKYHTVPVPPKGRVMLHWLLLCQTGMKAMAVPLLFQIIFGVFNGLYHYAVCEKAYARIVPDD.

The next 4 helical transmembrane spans lie at 71 to 91, 109 to 129, 140 to 160, and 198 to 218; these read IRGT…ANLV, LTTL…TDAL, VLRS…ALAF, and VPLL…YAVC.

In terms of assembly, part of the mitochondrial complex I assembly/MCIA complex that comprises at least the core subunits TMEM126B, NDUFAF1, ECSIT and ACAD9 and complement subunits such as COA1 and TMEM186. Associates with the intermediate 370 kDa subcomplex of incompletely assembled complex I. Interacts with TMEM70.

Its subcellular location is the mitochondrion membrane. Functionally, as part of the MCIA complex, involved in the assembly of the mitochondrial complex I. Participates in constructing the membrane arm of complex I. The sequence is that of Complex I assembly factor TMEM126B, mitochondrial from Rattus norvegicus (Rat).